A 489-amino-acid polypeptide reads, in one-letter code: EGF-like domain-containing protein 2 (489 aa).

The N-terminal stretch at 1-23 (MMQTLLRGLCVVVLFWGYIKASA) is a signal peptide. Residues 73–109 (PATLCDPPCLNGGQCFEPTADTYMCMCSEAFYGSQCE) enclose the EGF-like domain. 3 cysteine pairs are disulfide-bonded: Cys77–Cys87, Cys81–Cys97, and Cys99–Cys108. The ZP domain maps to 116–370 (ECSGDQITIN…GSCPTPAPPA (255 aa)). Residue Asn229 is glycosylated (N-linked (GlcNAc...) asparagine). Disordered regions lie at residues 358-389 (CEPGSCPTPAPPAPVQPTPSENPGRKRRAASD) and 404-425 (RSNEKLRLPHNKSDKKSQQNAD). Pro residues predominate over residues 363–374 (CPTPAPPAPVQP). The segment covering 404 to 420 (RSNEKLRLPHNKSDKKS) has biased composition (basic and acidic residues). 2 N-linked (GlcNAc...) asparagine glycosylation sites follow: Asn414 and Asn479.

In terms of tissue distribution, component of the acid-insoluble organic matrix of calcified layers of the shell (at protein level).

The protein resides in the secreted. This chain is EGF-like domain-containing protein 2, found in Lottia gigantea (Giant owl limpet).